The primary structure comprises 533 residues: Non-specific phospholipase C1 (533 aa).

The signal sequence occupies residues Met1–Ser22.

It belongs to the bacterial phospholipase C family. Expressed in roots, leaves, stems, flowers and siliques.

The protein localises to the secreted. This Arabidopsis thaliana (Mouse-ear cress) protein is Non-specific phospholipase C1 (NPC1).